We begin with the raw amino-acid sequence, 464 residues long: UDP-N-acetylmuramate--L-alanine ligase (464 aa).

112 to 118 lines the ATP pocket; the sequence is GTHGKTT.

It belongs to the MurCDEF family.

The protein resides in the cytoplasm. It carries out the reaction UDP-N-acetyl-alpha-D-muramate + L-alanine + ATP = UDP-N-acetyl-alpha-D-muramoyl-L-alanine + ADP + phosphate + H(+). The protein operates within cell wall biogenesis; peptidoglycan biosynthesis. Functionally, cell wall formation. The sequence is that of UDP-N-acetylmuramate--L-alanine ligase from Acidithiobacillus ferrooxidans (strain ATCC 23270 / DSM 14882 / CIP 104768 / NCIMB 8455) (Ferrobacillus ferrooxidans (strain ATCC 23270)).